Reading from the N-terminus, the 205-residue chain is Molybdenum cofactor guanylyltransferase (205 aa).

GTP is bound by residues 14–16 (LAG), K27, D77, and D107. D107 contributes to the Mg(2+) binding site.

The protein belongs to the MobA family. In terms of assembly, monomer. Requires Mg(2+) as cofactor.

The protein localises to the cytoplasm. The enzyme catalyses Mo-molybdopterin + GTP + H(+) = Mo-molybdopterin guanine dinucleotide + diphosphate. Its function is as follows. Transfers a GMP moiety from GTP to Mo-molybdopterin (Mo-MPT) cofactor (Moco or molybdenum cofactor) to form Mo-molybdopterin guanine dinucleotide (Mo-MGD) cofactor. This is Molybdenum cofactor guanylyltransferase from Burkholderia cenocepacia (strain HI2424).